The primary structure comprises 152 residues: Xanthine-guanine phosphoribosyltransferase (152 aa).

5-phospho-alpha-D-ribose 1-diphosphate contacts are provided by residues 37 to 38, Arg-69, and 88 to 96; these read RG and DDLVDSGDT. Arg-69 serves as a coordination point for GMP. Residue Asp-89 coordinates Mg(2+). Residues Asp-92 and Ile-135 each contribute to the guanine site. Residues Asp-92 and Ile-135 each coordinate xanthine. GMP is bound by residues 92–96 and 134–135; these read DSGDT and WI.

It belongs to the purine/pyrimidine phosphoribosyltransferase family. XGPT subfamily. In terms of assembly, homotetramer. Mg(2+) serves as cofactor.

The protein resides in the cell inner membrane. It carries out the reaction GMP + diphosphate = guanine + 5-phospho-alpha-D-ribose 1-diphosphate. It catalyses the reaction XMP + diphosphate = xanthine + 5-phospho-alpha-D-ribose 1-diphosphate. The catalysed reaction is IMP + diphosphate = hypoxanthine + 5-phospho-alpha-D-ribose 1-diphosphate. The protein operates within purine metabolism; GMP biosynthesis via salvage pathway; GMP from guanine: step 1/1. It participates in purine metabolism; XMP biosynthesis via salvage pathway; XMP from xanthine: step 1/1. Purine salvage pathway enzyme that catalyzes the transfer of the ribosyl-5-phosphate group from 5-phospho-alpha-D-ribose 1-diphosphate (PRPP) to the N9 position of the 6-oxopurines guanine and xanthine to form the corresponding ribonucleotides GMP (guanosine 5'-monophosphate) and XMP (xanthosine 5'-monophosphate), with the release of PPi. To a lesser extent, also acts on hypoxanthine. This chain is Xanthine-guanine phosphoribosyltransferase, found in Aliivibrio salmonicida (strain LFI1238) (Vibrio salmonicida (strain LFI1238)).